The sequence spans 745 residues: Junction plakoglobin (745 aa).

The residue at position 1 (M1) is an N-acetylmethionine. O-linked (GlcNAc) threonine glycosylation occurs at T14. A phosphoserine mark is found at S99 and S125. 12 ARM repeats span residues 132 to 171 (NYQDDAELATRALPELTKLLNDEDPVVVTKAAMIVNQLSK), 172 to 215 (KEAS…LSHH), 216 to 255 (REGLLAIFKSGGIPALVRMLSSPVESVLFYAITTLHNLLL), 258 to 297 (EGAKMAVRLADGLQKMVPLLNKNNPKFLAITTDCLQLLAY), 298 to 341 (GNQE…LSVC), 342 to 381 (PSNKPAIVEAGGMQALGKHLTSNSPRLVQNCLWTLRNLSD), 383 to 420 (ATKQEGLESVLKILVNQLSVDDVNVLTCATGTLSNLTC), 423 to 464 (SKNK…HLTS), 470 to 510 (EMAQ…NLAL), 512 to 551 (PANHAPLQEASVIPRLVQLLVKAHQDAQRHVAAGTQQPYT), 574 to 613 (PMNRMEIFRLNTIPLFVQLLYSSVENIQRVAAGVLCELAQ), and 615 to 661 (KEAA…PDYR). Residues 132 to 297 (NYQDDAELAT…TTDCLQLLAY (166 aa)) are interaction with DSC1 and DSG1. Position 182 is a phosphoserine (S182). The interval 574-661 (PMNRMEIFRL…ISEDKNPDYR (88 aa)) is interaction with DSC1. Phosphoserine occurs at positions 665 and 730.

It belongs to the beta-catenin family. In terms of assembly, homodimer. Component of an E-cadherin/catenin adhesion complex composed of at least E-cadherin/CDH1 and gamma-catenin/JUP, and possibly alpha-catenin/CTNNA1; the complex is located to adherens junctions. The stable association of CTNNA1 is controversial as CTNNA1 was shown not to bind to F-actin when assembled in the complex. Interacts with MUC1. Interacts with CAV1. Interacts with PTPRJ. Interacts with DSG1. Interacts with DSC1 and DSC2. Interacts with PKP2. Interacts with PKP3 (via N-terminus); the interaction is required for PKP3 localization to desmosome cell-cell junctions. Interacts with DSG4. May be phosphorylated by FER.

The protein localises to the cell junction. Its subcellular location is the adherens junction. The protein resides in the desmosome. It localises to the cytoplasm. It is found in the cytoskeleton. The protein localises to the cell membrane. Its subcellular location is the nucleus. Common junctional plaque protein. The membrane-associated plaques are architectural elements in an important strategic position to influence the arrangement and function of both the cytoskeleton and the cells within the tissue. The presence of plakoglobin in both the desmosomes and in the intermediate junctions suggests that it plays a central role in the structure and function of submembranous plaques. Acts as a substrate for VE-PTP and is required by it to stimulate VE-cadherin function in endothelial cells. Can replace beta-catenin in E-cadherin/catenin adhesion complexes which are proposed to couple cadherins to the actin cytoskeleton. In Sus scrofa (Pig), this protein is Junction plakoglobin.